We begin with the raw amino-acid sequence, 78 residues long: Large ribosomal subunit protein bL28 (78 aa).

A disordered region spans residues 1 to 29 (MSAHCQVTGRKPSFGKSVSHSHRRTSRRW).

It belongs to the bacterial ribosomal protein bL28 family.

The polypeptide is Large ribosomal subunit protein bL28 (Corynebacterium glutamicum (strain ATCC 13032 / DSM 20300 / JCM 1318 / BCRC 11384 / CCUG 27702 / LMG 3730 / NBRC 12168 / NCIMB 10025 / NRRL B-2784 / 534)).